The chain runs to 423 residues: Adenylosuccinate synthetase (423 aa).

GTP is bound by residues 12 to 18 and 40 to 42; these read GDEGKGK and GHT. The Proton acceptor role is filled by Asp13. The Mg(2+) site is built by Asp13 and Gly40. IMP contacts are provided by residues 13 to 16, 38 to 41, Thr129, Arg143, Gln221, Thr236, and Arg300; these read DEGK and NAGH. The active-site Proton donor is His41. 296–302 is a binding site for substrate; that stretch reads AVTGRER. Residues Arg302, 328 to 330, and 408 to 410 each bind GTP; these read KSD and SVG.

This sequence belongs to the adenylosuccinate synthetase family. In terms of assembly, homodimer. It depends on Mg(2+) as a cofactor.

It localises to the cytoplasm. The enzyme catalyses IMP + L-aspartate + GTP = N(6)-(1,2-dicarboxyethyl)-AMP + GDP + phosphate + 2 H(+). Its pathway is purine metabolism; AMP biosynthesis via de novo pathway; AMP from IMP: step 1/2. Its function is as follows. Plays an important role in the de novo pathway of purine nucleotide biosynthesis. Catalyzes the first committed step in the biosynthesis of AMP from IMP. The chain is Adenylosuccinate synthetase from Phocaeicola vulgatus (strain ATCC 8482 / DSM 1447 / JCM 5826 / CCUG 4940 / NBRC 14291 / NCTC 11154) (Bacteroides vulgatus).